Reading from the N-terminus, the 302-residue chain is uncharacterized protein (302 aa).

Disordered stretches follow at residues 15-34 (RHST…RFHK), 143-195 (GMPL…PSHL), and 221-246 (GSEA…RESV). Over residues 172 to 189 (HSDENKATGQGRENRDQP) the composition is skewed to basic and acidic residues.

This is an uncharacterized protein from Homo sapiens (Human).